We begin with the raw amino-acid sequence, 206 residues long: uncharacterized protein (206 aa).

Residues 21 to 43 (VPINITMSICALTALLKSYSITG) form a helical membrane-spanning segment.

The protein resides in the membrane. This is an uncharacterized protein from Acanthamoeba polyphaga (Amoeba).